The primary structure comprises 61 residues: N-acetyl-D-glucosamine kinase (61 aa).

Tyr-30 is modified (phosphotyrosine). Ser-45 lines the ATP pocket.

The protein belongs to the eukaryotic-type N-acetylglucosamine kinase family. As to quaternary structure, homodimer.

The catalysed reaction is N-acetyl-D-glucosamine + ATP = N-acetyl-D-glucosamine 6-phosphate + ADP + H(+). It catalyses the reaction aldehydo-N-acetyl-D-mannosamine + ATP = aldehydo-N-acetyl-D-mannosamine 6-phosphate + ADP + H(+). It carries out the reaction N-acetyl-D-muramoyl-L-alanyl-D-isoglutamine + ATP = 6-O-phospho-N-acetyl-D-muramoyl-L-alanyl-D-isoglutamine + ADP + H(+). It participates in amino-sugar metabolism; N-acetylneuraminate degradation. Functionally, converts endogenous N-acetylglucosamine (GlcNAc), a major component of complex carbohydrates, from lysosomal degradation or nutritional sources into GlcNAc 6-phosphate. Also has N-acetylmannosamine (ManNAc) kinase activity. Involved in the N-glycolylneuraminic acid (Neu5Gc) degradation pathway. Also involved in innate immunity by promoting detection of bacterial peptidoglycan by NOD2: acts by catalyzing phosphorylation of muramyl dipeptide (MDP), a fragment of bacterial peptidoglycan, to generate 6-O-phospho-muramyl dipeptide, which acts as a direct ligand for NOD2. The sequence is that of N-acetyl-D-glucosamine kinase from Mesocricetus auratus (Golden hamster).